The following is a 1142-amino-acid chain: Melanoma-associated antigen C1 (1142 aa).

The interval 1 to 132 (MGDKDMPTAG…DVQSPLQNPA (132 aa)) is disordered. A compositionally biased stretch (low complexity) spans 13 to 42 (SLLQSSSESPQSCPEGEDSQSPLQIPQSSP). Ser-63 bears the Phosphoserine mark. Residues 76–87 (SQSPLQIPQSSP) are compositionally biased toward low complexity. Over residues 92 to 103 (TQSPLQNSQSSP) the composition is skewed to polar residues. Residues Ser-207 and Ser-382 each carry the phosphoserine modification. 2 disordered regions span residues 502 to 778 (TQST…LQRP) and 791 to 893 (LQSS…SLTD). The span at 614–626 (SPLQGEEFQSSLQ) shows a compositional bias: polar residues. The segment covering 627-659 (SPVSICSSSTPSSLPQSFPESSQSPPEGPVQSP) has biased composition (low complexity). Residues 671 to 680 (HSQSPLQSPE) are compositionally biased toward polar residues. Low complexity-rich tracts occupy residues 741–762 (QSPV…FPES) and 807–889 (QSPL…LESD). The MAGE domain occupies 908–1106 (LDEKVDELAR…ITFPSSYKDA (199 aa)). Position 1063 is a phosphoserine (Ser-1063). The tract at residues 1118 to 1142 (IDTTDDSTATESASSSVMSPSFSSE) is disordered. A compositionally biased stretch (low complexity) spans 1123–1142 (DSTATESASSSVMSPSFSSE).

Expressed in testis and in tumors of a wide variety of histologic types.

The protein resides in the cytoplasm. This is Melanoma-associated antigen C1 (MAGEC1) from Homo sapiens (Human).